Reading from the N-terminus, the 252-residue chain is Ubiquinone/menaquinone biosynthesis C-methyltransferase UbiE (252 aa).

Residues T71, D100, D124–A125, and S141 contribute to the S-adenosyl-L-methionine site.

Belongs to the class I-like SAM-binding methyltransferase superfamily. MenG/UbiE family.

It catalyses the reaction a 2-demethylmenaquinol + S-adenosyl-L-methionine = a menaquinol + S-adenosyl-L-homocysteine + H(+). The catalysed reaction is a 2-methoxy-6-(all-trans-polyprenyl)benzene-1,4-diol + S-adenosyl-L-methionine = a 5-methoxy-2-methyl-3-(all-trans-polyprenyl)benzene-1,4-diol + S-adenosyl-L-homocysteine + H(+). It functions in the pathway quinol/quinone metabolism; menaquinone biosynthesis; menaquinol from 1,4-dihydroxy-2-naphthoate: step 2/2. Its pathway is cofactor biosynthesis; ubiquinone biosynthesis. Functionally, methyltransferase required for the conversion of demethylmenaquinol (DMKH2) to menaquinol (MKH2) and the conversion of 2-polyprenyl-6-methoxy-1,4-benzoquinol (DDMQH2) to 2-polyprenyl-3-methyl-6-methoxy-1,4-benzoquinol (DMQH2). The sequence is that of Ubiquinone/menaquinone biosynthesis C-methyltransferase UbiE from Caulobacter vibrioides (strain ATCC 19089 / CIP 103742 / CB 15) (Caulobacter crescentus).